A 757-amino-acid polypeptide reads, in one-letter code: E3 ubiquitin-protein ligase RNF12-B (757 aa).

A compositionally biased stretch (polar residues) spans 1–10; that stretch reads MESADSTGKG. Disordered stretches follow at residues 1-29, 68-519, and 619-652; these read MESA…LDRE, LQQI…TYES, and EPAE…GGVT. Low complexity predominate over residues 11 to 21; the sequence is STEQSESQRQS. Composition is skewed to polar residues over residues 110 to 138 and 147 to 163; these read SVRQ…NPNS and INVN…SLDQ. 21 repeat units span residues 197–202, 203–208, 209–214, 215–220, 221–226, 227–232, 237–242, 243–248, 249–254, 255–260, 261–266, 267–272, 273–278, 279–284, 285–290, 291–296, 297–302, 303–308, 309–314, 315–320, and 321–326. The tract at residues 197-326 is 21 X 6 AA approximate repeats of P-[EV]-S-V-[PA]-[EV]; that stretch reads PESVDEPVSV…SVPVPESVPV (130 aa). The span at 202-237 shows a compositional bias: low complexity; it reads EPVSVAEPVSVAEPVSVAEPESVAEPESVAASVPVP. Residues 245 to 313 show a composition bias toward acidic residues; the sequence is SVPEPESVPE…ESVPEPESIA (69 aa). Positions 314–327 are enriched in low complexity; the sequence is EPESVPVPESVPVA. Basic and acidic residues predominate over residues 352–367; the sequence is RSPDQRRTRARTDRSR. Residues 383–392 show a composition bias toward polar residues; the sequence is HSSSQTVDAS. The span at 408–424 shows a compositional bias: low complexity; sequence SSQVHSSSSNETEGSSR. Polar residues predominate over residues 428–452; sequence HITARQQALGTEGQSQSTVHLSNPE. The segment covering 453-466 has biased composition (low complexity); it reads SRSSSQTPQTDSPS. Polar residues predominate over residues 467-476; sequence NAETTGTGQR. Residues 490-500 are compositionally biased toward basic and acidic residues; it reads RPGDYRQRDSI. Polar residues predominate over residues 501–517; sequence ANRTRSRSQTPNNTVTY. The RING-type; atypical zinc finger occupies 703–744; it reads CSVCITEYTEGNKLRKLPCSHEYHIHCIDRWLSENSTCPICR. The PDZ-binding signature appears at 754 to 757; that stretch reads ESIV.

It belongs to the RNF12 family. In terms of assembly, forms homodimers through the C-terminal region. The N-terminus interacts with the homeobox of LIM/homeobox factor lhx1/lim1, with lhx3/lim3 and lhx5/lim5, and with the N-terminus of ldb1. Shows overlapping expression with lhx1/lim1 and ldb1 in the gastrula mesoderm, and expression overlaps with ldb1 throughout early embryogenesis. After gastrulation, expression is gradually restricted to tissues originated from the ectoderm, the neuroectoderm, neural crest and epidermis, and subsequently to the neural tube as well as the head and tailbud region.

It is found in the nucleus. It carries out the reaction S-ubiquitinyl-[E2 ubiquitin-conjugating enzyme]-L-cysteine + [acceptor protein]-L-lysine = [E2 ubiquitin-conjugating enzyme]-L-cysteine + N(6)-ubiquitinyl-[acceptor protein]-L-lysine.. It participates in protein modification; protein ubiquitination. Acts as an E3 ubiquitin-protein ligase specific for ldb1, mediating ubiquitination and proteasome-dependent degradation of excess ldb1 in a RING-dependent manner. Does not degrade ldb1 bound to lhx1/lim1, nor lim1 itself and thus contributes to the establishment of proper ldb1-lhx1/lim1 stoichiometry and the formation of a ldb1-lhx1/lim1 complex. Interferes with Spemann organizer function and suppresses secondary axis formation induced by ldb1 and lhx1/lim1. The polypeptide is E3 ubiquitin-protein ligase RNF12-B (rnf12-b) (Xenopus laevis (African clawed frog)).